The sequence spans 484 residues: 6-phosphogluconate dehydrogenase, decarboxylating (484 aa).

Residues 11-16, 34-36, 76-78, and Asn-104 each bind NADP(+); these read GLAVMG, NRT, and VRA. Residues Asn-104 and 130 to 132 each bind substrate; that span reads SGG. Lys-185 serves as the catalytic Proton acceptor. Residue 188 to 189 coordinates substrate; that stretch reads HN. The active-site Proton donor is Glu-192. Substrate-binding residues include Tyr-193, Lys-262, Arg-289, Arg-447, and His-453.

It belongs to the 6-phosphogluconate dehydrogenase family. In terms of assembly, homodimer.

It carries out the reaction 6-phospho-D-gluconate + NADP(+) = D-ribulose 5-phosphate + CO2 + NADPH. It functions in the pathway carbohydrate degradation; pentose phosphate pathway; D-ribulose 5-phosphate from D-glucose 6-phosphate (oxidative stage): step 3/3. In terms of biological role, catalyzes the oxidative decarboxylation of 6-phosphogluconate to ribulose 5-phosphate and CO(2), with concomitant reduction of NADP to NADPH. The sequence is that of 6-phosphogluconate dehydrogenase, decarboxylating from Aggregatibacter actinomycetemcomitans (Actinobacillus actinomycetemcomitans).